A 657-amino-acid chain; its full sequence is Pentatricopeptide repeat-containing protein CRR2, chloroplastic (657 aa).

The transit peptide at methionine 1 to glutamine 51 directs the protein to the chloroplast. PPR repeat units lie at residues alanine 45–proline 75, serine 76–glutamine 110, aspartate 111–arginine 141, threonine 142–serine 176, aspartate 177–serine 215, histidine 216–arginine 246, asparagine 247–glutamate 277, asparagine 284–serine 318, isoleucine 319–arginine 349, aspartate 350–proline 384, threonine 385–proline 420, and glutamine 421–glutamate 451. Residues valine 456 to arginine 531 are type E motif. The interval arginine 532–lysine 562 is type E(+) motif. A type DYW motif region spans residues glutamate 563–tryptophan 657.

The protein belongs to the PPR family. PCMP-H subfamily.

It localises to the plastid. The protein localises to the chloroplast. Functionally, required for the intergenic processing between chloroplast rsp7 and ndhB transcripts. Necessary for chloroplast NADH dehydrogenase-like (NDH) complex-dependent cyclic electron transport around PSI (CET). The protein is Pentatricopeptide repeat-containing protein CRR2, chloroplastic of Arabidopsis thaliana (Mouse-ear cress).